The chain runs to 280 residues: Ribosomal RNA small subunit methyltransferase I (280 aa).

This sequence belongs to the methyltransferase superfamily. RsmI family.

The protein localises to the cytoplasm. The enzyme catalyses cytidine(1402) in 16S rRNA + S-adenosyl-L-methionine = 2'-O-methylcytidine(1402) in 16S rRNA + S-adenosyl-L-homocysteine + H(+). Functionally, catalyzes the 2'-O-methylation of the ribose of cytidine 1402 (C1402) in 16S rRNA. This Rickettsia prowazekii (strain Madrid E) protein is Ribosomal RNA small subunit methyltransferase I.